The sequence spans 198 residues: HTH-type transcriptional regulator BetI (198 aa).

The HTH tetR-type domain occupies 8–68 (PLRRRELIDA…ATMRHLLREL (61 aa)). The segment at residues 31–50 (TVAQIAHEAGVSPALAHHYF) is a DNA-binding region (H-T-H motif).

Its pathway is amine and polyamine biosynthesis; betaine biosynthesis via choline pathway [regulation]. Repressor involved in the biosynthesis of the osmoprotectant glycine betaine. It represses transcription of the choline transporter BetT and the genes of BetAB involved in the synthesis of glycine betaine. This Brucella suis (strain ATCC 23445 / NCTC 10510) protein is HTH-type transcriptional regulator BetI.